Here is a 439-residue protein sequence, read N- to C-terminus: Glucan 1,3-beta-glucosidase (439 aa).

Residues 1 to 18 form the signal peptide; sequence MLLSLLFLLSTFAFGALT. Catalysis depends on glutamate 227, which acts as the Proton donor. Disulfide bonds link cysteine 311–cysteine 437 and cysteine 336–cysteine 366. Glutamate 328 functions as the Nucleophile in the catalytic mechanism.

The protein belongs to the glycosyl hydrolase 5 (cellulase A) family.

The protein resides in the secreted. The catalysed reaction is Successive hydrolysis of beta-D-glucose units from the non-reducing ends of (1-&gt;3)-beta-D-glucans, releasing alpha-glucose.. In terms of biological role, beta-glucanases participate in the metabolism of beta-glucan, the main structural component of the cell wall. It could also function biosynthetically as a transglycosylase. The sequence is that of Glucan 1,3-beta-glucosidase (EXG1) from Lachancea kluyveri (strain ATCC 58438 / CBS 3082 / BCRC 21498 / NBRC 1685 / JCM 7257 / NCYC 543 / NRRL Y-12651) (Yeast).